A 243-amino-acid chain; its full sequence is Alanyl-tRNA editing protein AlaX-M (243 aa).

Zn(2+) contacts are provided by histidine 105, histidine 109, cysteine 208, and histidine 212.

The protein belongs to the class-II aminoacyl-tRNA synthetase family. Editing domain AlaX-M subfamily. It depends on Zn(2+) as a cofactor.

It localises to the cytoplasm. Functions in trans to edit the amino acid moiety from incorrectly charged Ser-tRNA(Ala) or Gly-tRNA(Ala). Has no activity on incorrectly charged Ser-tRNA(Thr), nor on correctly charged Ala-tRNA(Ala) or Ser-tRNA(Ser). This is Alanyl-tRNA editing protein AlaX-M (alaXM) from Methanosarcina barkeri (strain Fusaro / DSM 804).